Here is a 450-residue protein sequence, read N- to C-terminus: D-inositol 3-phosphate glycosyltransferase (450 aa).

Residue H21 coordinates 1D-myo-inositol 3-phosphate. UDP-N-acetyl-alpha-D-glucosamine contacts are provided by residues 27–28 (QP) and G35. 1D-myo-inositol 3-phosphate contacts are provided by residues 32–37 (DAGGMN), K90, Y123, T147, and R167. 3 residues coordinate UDP-N-acetyl-alpha-D-glucosamine: R241, K246, and V307. The Mg(2+) site is built by Y316, R317, and A319. Residues E329 and E337 each coordinate UDP-N-acetyl-alpha-D-glucosamine. T343 is a Mg(2+) binding site.

This sequence belongs to the glycosyltransferase group 1 family. MshA subfamily. Homodimer.

It catalyses the reaction 1D-myo-inositol 3-phosphate + UDP-N-acetyl-alpha-D-glucosamine = 1D-myo-inositol 2-acetamido-2-deoxy-alpha-D-glucopyranoside 3-phosphate + UDP + H(+). In terms of biological role, catalyzes the transfer of a N-acetyl-glucosamine moiety to 1D-myo-inositol 3-phosphate to produce 1D-myo-inositol 2-acetamido-2-deoxy-glucopyranoside 3-phosphate in the mycothiol biosynthesis pathway. The protein is D-inositol 3-phosphate glycosyltransferase of Geodermatophilus obscurus (strain ATCC 25078 / DSM 43160 / JCM 3152 / CCUG 61914 / KCC A-0152 / KCTC 9177 / NBRC 13315 / NRRL B-3577 / G-20).